Here is a 245-residue protein sequence, read N- to C-terminus: tRNA1(Val) (adenine(37)-N6)-methyltransferase (245 aa).

Belongs to the methyltransferase superfamily. tRNA (adenine-N(6)-)-methyltransferase family.

Its subcellular location is the cytoplasm. It catalyses the reaction adenosine(37) in tRNA1(Val) + S-adenosyl-L-methionine = N(6)-methyladenosine(37) in tRNA1(Val) + S-adenosyl-L-homocysteine + H(+). Its function is as follows. Specifically methylates the adenine in position 37 of tRNA(1)(Val) (anticodon cmo5UAC). This chain is tRNA1(Val) (adenine(37)-N6)-methyltransferase, found in Shigella dysenteriae serotype 1 (strain Sd197).